Here is a 475-residue protein sequence, read N- to C-terminus: Ribulose bisphosphate carboxylase large chain (475 aa).

Positions 1-2 are excised as a propeptide; that stretch reads MA. Pro-3 is modified (N-acetylproline). Position 14 is an N6,N6,N6-trimethyllysine (Lys-14). Substrate-binding residues include Asn-123 and Thr-173. Lys-175 serves as the catalytic Proton acceptor. Lys-177 serves as a coordination point for substrate. Positions 201, 203, and 204 each coordinate Mg(2+). Lys-201 carries the post-translational modification N6-carboxylysine. The active-site Proton acceptor is His-294. Positions 295, 327, and 379 each coordinate substrate.

The protein belongs to the RuBisCO large chain family. Type I subfamily. As to quaternary structure, heterohexadecamer of 8 large chains and 8 small chains; disulfide-linked. The disulfide link is formed within the large subunit homodimers. The cofactor is Mg(2+). The disulfide bond which can form in the large chain dimeric partners within the hexadecamer appears to be associated with oxidative stress and protein turnover.

The protein localises to the plastid. Its subcellular location is the chloroplast. The catalysed reaction is 2 (2R)-3-phosphoglycerate + 2 H(+) = D-ribulose 1,5-bisphosphate + CO2 + H2O. The enzyme catalyses D-ribulose 1,5-bisphosphate + O2 = 2-phosphoglycolate + (2R)-3-phosphoglycerate + 2 H(+). Its function is as follows. RuBisCO catalyzes two reactions: the carboxylation of D-ribulose 1,5-bisphosphate, the primary event in carbon dioxide fixation, as well as the oxidative fragmentation of the pentose substrate in the photorespiration process. Both reactions occur simultaneously and in competition at the same active site. The sequence is that of Ribulose bisphosphate carboxylase large chain from Oedogonium cardiacum (Filamentous green alga).